A 281-amino-acid polypeptide reads, in one-letter code: NADPH-dependent 7-cyano-7-deazaguanine reductase (281 aa).

Residue 88–90 coordinates substrate; it reads IES. Position 90–91 (90–91) interacts with NADPH; it reads SK. The active-site Thioimide intermediate is the cysteine 189. Aspartate 196 functions as the Proton donor in the catalytic mechanism. 228 to 229 is a substrate binding site; the sequence is HE. 257–258 is a binding site for NADPH; it reads RG.

It belongs to the GTP cyclohydrolase I family. QueF type 2 subfamily. In terms of assembly, homodimer.

The protein resides in the cytoplasm. The enzyme catalyses 7-aminomethyl-7-carbaguanine + 2 NADP(+) = 7-cyano-7-deazaguanine + 2 NADPH + 3 H(+). It functions in the pathway tRNA modification; tRNA-queuosine biosynthesis. Its function is as follows. Catalyzes the NADPH-dependent reduction of 7-cyano-7-deazaguanine (preQ0) to 7-aminomethyl-7-deazaguanine (preQ1). In Sodalis glossinidius (strain morsitans), this protein is NADPH-dependent 7-cyano-7-deazaguanine reductase.